The following is a 296-amino-acid chain: 4-hydroxy-tetrahydrodipicolinate synthase (296 aa).

Thr-49 contacts pyruvate. Residue Tyr-137 is the Proton donor/acceptor of the active site. The active-site Schiff-base intermediate with substrate is the Lys-166. Position 208 (Val-208) interacts with pyruvate.

It belongs to the DapA family. In terms of assembly, homotetramer; dimer of dimers.

The protein resides in the cytoplasm. The enzyme catalyses L-aspartate 4-semialdehyde + pyruvate = (2S,4S)-4-hydroxy-2,3,4,5-tetrahydrodipicolinate + H2O + H(+). Its pathway is amino-acid biosynthesis; L-lysine biosynthesis via DAP pathway; (S)-tetrahydrodipicolinate from L-aspartate: step 3/4. Catalyzes the condensation of (S)-aspartate-beta-semialdehyde [(S)-ASA] and pyruvate to 4-hydroxy-tetrahydrodipicolinate (HTPA). The sequence is that of 4-hydroxy-tetrahydrodipicolinate synthase from Desulforamulus reducens (strain ATCC BAA-1160 / DSM 100696 / MI-1) (Desulfotomaculum reducens).